The sequence spans 272 residues: Type II secretion system protein C (272 aa).

The Cytoplasmic segment spans residues 1 to 16; sequence MNISKLPPLSPSVIRR. The chain crosses the membrane as a helical span at residues 17 to 35; the sequence is ILFYLLMLLFCQQLAMIFW. Topologically, residues 36 to 272 are periplasmic; the sequence is RIGLPDNAPV…DIYMEFGGDE (237 aa).

The protein belongs to the GSP C family.

Its subcellular location is the cell inner membrane. Its function is as follows. Involved in a type II secretion system (T2SS, formerly general secretion pathway, GSP) for the export of proteins. Required for the translocation of the multiple pectic enzymes. This Dickeya dadantii (strain 3937) (Erwinia chrysanthemi (strain 3937)) protein is Type II secretion system protein C (outC).